The chain runs to 172 residues: Ribosome maturation factor RimM (172 aa).

The PRC barrel domain occupies 97-170 (ENEFYFHEII…KITIEVMEGL (74 aa)).

This sequence belongs to the RimM family. As to quaternary structure, binds ribosomal protein uS19.

It localises to the cytoplasm. Its function is as follows. An accessory protein needed during the final step in the assembly of 30S ribosomal subunit, possibly for assembly of the head region. Essential for efficient processing of 16S rRNA. May be needed both before and after RbfA during the maturation of 16S rRNA. It has affinity for free ribosomal 30S subunits but not for 70S ribosomes. This chain is Ribosome maturation factor RimM, found in Listeria innocua serovar 6a (strain ATCC BAA-680 / CLIP 11262).